A 148-amino-acid polypeptide reads, in one-letter code: CDC25-like phosphatase YCH1 (148 aa).

At M1 the chain carries N-acetylmethionine. Residues 29–137 (LREPFQVVDV…WQSVYGDDES (109 aa)) enclose the Rhodanese domain.

It belongs to the MPI phosphatase family.

It is found in the cytoplasm. The protein resides in the nucleus. In terms of biological role, protein phosphatase. The protein is CDC25-like phosphatase YCH1 (YCH1) of Saccharomyces cerevisiae (strain ATCC 204508 / S288c) (Baker's yeast).